We begin with the raw amino-acid sequence, 475 residues long: MGMWASVDAMWDFPAEKRIFGAVLLFSWTVYLWETFLAQRQRRIYKTTTRVPAELEQIMDSDTFEKSRLYQLDKSTFSFWSGLYSEVEGTFILLFGGIPYLWRLSGQFCSSAGFGPEYEIIQSLVFLLLATLFSALTGLPWSLYNTFVIEEKHGFNHQTLEFFMKDAIKKFIVTQCILLPVSALLLYIIKIGGDYFFIYAWLFTLVVSLVLVTIYADYIAPLFDKFTPLPEGKLKQEIEVMAKSIDFPLTKVYVVEGSKRSSHSNAYFYGFFKNKRIVLFDTLLEEYSVPNKDNQEESGMEARNEGEGDSEEVKAKVKNKKQGCKNEEVLAVLGHELGHWKLGHTVKNIIISQMNSFLCFFLFAVLIGRRELFAAFGFYDSQPTLIGLLIIFQFIFSPYNEVLSFCLTVLSRRFEFQADAFAKKLGKAKDLYSALIKLNKDNLGFPVSDWLFSTWHYSHPPLLERLQALKNAKQD.

The Lumenal portion of the chain corresponds to 1-18 (MGMWASVDAMWDFPAEKR). A helical membrane pass occupies residues 19–39 (IFGAVLLFSWTVYLWETFLAQ). The Nuclear portion of the chain corresponds to 40–81 (RQRRIYKTTTRVPAELEQIMDSDTFEKSRLYQLDKSTFSFWS). The helical transmembrane segment at 82 to 102 (GLYSEVEGTFILLFGGIPYLW) threads the bilayer. Topologically, residues 103 to 123 (RLSGQFCSSAGFGPEYEIIQS) are lumenal. Residues 124–144 (LVFLLLATLFSALTGLPWSLY) traverse the membrane as a helical segment. The Nuclear segment spans residues 145–170 (NTFVIEEKHGFNHQTLEFFMKDAIKK). A helical transmembrane segment spans residues 171–191 (FIVTQCILLPVSALLLYIIKI). The Lumenal segment spans residues 192-195 (GGDY). A helical membrane pass occupies residues 196-216 (FFIYAWLFTLVVSLVLVTIYA). Residues 217–347 (DYIAPLFDKF…GHWKLGHTVK (131 aa)) lie on the Nuclear side of the membrane. Residues 293–314 (DNQEESGMEARNEGEGDSEEVK) form a disordered region. Over residues 300–314 (MEARNEGEGDSEEVK) the composition is skewed to basic and acidic residues. His-335 is a Zn(2+) binding site. The active site involves Glu-336. His-339 is a binding site for Zn(2+). Residues 348-368 (NIIISQMNSFLCFFLFAVLIG) form a helical membrane-spanning segment. Over 369 to 382 (RRELFAAFGFYDSQ) the chain is Lumenal. A helical transmembrane segment spans residues 383-405 (PTLIGLLIIFQFIFSPYNEVLSF). At 406-475 (CLTVLSRRFE…LQALKNAKQD (70 aa)) the chain is on the nuclear side. Glu-415 contributes to the Zn(2+) binding site.

The protein belongs to the peptidase M48A family. Requires Zn(2+) as cofactor.

The protein resides in the endoplasmic reticulum membrane. It is found in the nucleus inner membrane. Its subcellular location is the early endosome membrane. The protein localises to the late endosome membrane. The enzyme catalyses Hydrolyzes the peptide bond -P2-(S-farnesyl or geranylgeranyl)C-P1'-P2'-P3'-COOH where P1' and P2' are amino acids with aliphatic side chains and P3' is any C-terminal residue.. Its activity is regulated as follows. Inhibited by HIV protease inhibitors, such as lopinavir, tipranavir and nelfinavir, leading to defects in lamin A/LMNA maturation and accumulation of prelamin-A/C precursors in cells. This causes defects in nuclear envelope integrity and release of DNA in the cytosol, activating the AIM2 inflammasome. Transmembrane metalloprotease whose catalytic activity is critical for processing lamin A/LMNA on the inner nuclear membrane and clearing clogged translocons on the endoplasmic reticulum. Proteolytically removes the C-terminal three residues of farnesylated proteins. Also plays an antiviral role independently of its protease activity by restricting enveloped RNA and DNA viruses. Mechanistically, controls IFITM antiviral pathway to hinder viruses from breaching the endosomal barrier by modulating membrane fluidity. The protein is CAAX prenyl protease 1 homolog of Mus musculus (Mouse).